Consider the following 347-residue polypeptide: Quinolinate synthase (347 aa).

H47 and S68 together coordinate iminosuccinate. C113 is a [4Fe-4S] cluster binding site. Iminosuccinate is bound by residues 139-141 and S156; that span reads YAN. C200 lines the [4Fe-4S] cluster pocket. Iminosuccinate is bound by residues 226–228 and T243; that span reads HPE. Position 297 (C297) interacts with [4Fe-4S] cluster.

It belongs to the quinolinate synthase family. Type 1 subfamily. It depends on [4Fe-4S] cluster as a cofactor.

The protein localises to the cytoplasm. It catalyses the reaction iminosuccinate + dihydroxyacetone phosphate = quinolinate + phosphate + 2 H2O + H(+). The protein operates within cofactor biosynthesis; NAD(+) biosynthesis; quinolinate from iminoaspartate: step 1/1. Catalyzes the condensation of iminoaspartate with dihydroxyacetone phosphate to form quinolinate. This is Quinolinate synthase from Escherichia coli O139:H28 (strain E24377A / ETEC).